Consider the following 378-residue polypeptide: Ret finger protein-like 2 (378 aa).

The RING-type; degenerate zinc finger occupies 101-143 (CPVCSDYLEKPMSLECGCAVCLKCINSLQKEPHGEDLLCCCSS). A B30.2/SPRY domain is found at 168–362 (EPKLKKILQM…DQGVLSICPL (195 aa)).

Seems to be expressed in prostate and less abundantly in adult brain, fetal liver, and fetal kidney.

The chain is Ret finger protein-like 2 (RFPL2) from Homo sapiens (Human).